A 95-amino-acid chain; its full sequence is Glutamyl-tRNA(Gln) amidotransferase subunit C (95 aa).

The protein belongs to the GatC family. In terms of assembly, heterotrimer of A, B and C subunits.

The enzyme catalyses L-glutamyl-tRNA(Gln) + L-glutamine + ATP + H2O = L-glutaminyl-tRNA(Gln) + L-glutamate + ADP + phosphate + H(+). The catalysed reaction is L-aspartyl-tRNA(Asn) + L-glutamine + ATP + H2O = L-asparaginyl-tRNA(Asn) + L-glutamate + ADP + phosphate + 2 H(+). Its function is as follows. Allows the formation of correctly charged Asn-tRNA(Asn) or Gln-tRNA(Gln) through the transamidation of misacylated Asp-tRNA(Asn) or Glu-tRNA(Gln) in organisms which lack either or both of asparaginyl-tRNA or glutaminyl-tRNA synthetases. The reaction takes place in the presence of glutamine and ATP through an activated phospho-Asp-tRNA(Asn) or phospho-Glu-tRNA(Gln). The sequence is that of Glutamyl-tRNA(Gln) amidotransferase subunit C from Rhizobium meliloti (strain 1021) (Ensifer meliloti).